Here is a 526-residue protein sequence, read N- to C-terminus: Probable Xaa-Pro aminopeptidase MGG_05684 (526 aa).

Positions 285, 296, 447, and 488 each coordinate Mn(2+).

It belongs to the peptidase M24B family. The cofactor is Mn(2+).

The catalysed reaction is Release of any N-terminal amino acid, including proline, that is linked to proline, even from a dipeptide or tripeptide.. Catalyzes the removal of a penultimate prolyl residue from the N-termini of peptides. The sequence is that of Probable Xaa-Pro aminopeptidase MGG_05684 from Pyricularia oryzae (strain 70-15 / ATCC MYA-4617 / FGSC 8958) (Rice blast fungus).